Reading from the N-terminus, the 338-residue chain is MSETKSKVLVLGGLGYIGSCFIDQLLKQYPDVTVSVIDINHTSLALQLLPRQVNVHFVNLLDRAQLTDTIAQINPDVVFHFAAKTSVKESTEQPLTYFDHNLVGTLNLLHALKELQKPIQLFFSSTAAVFGSASTLPIPENLVLEETLASNPYGISKFLSEIVLQTLTRSPHFQVIALRYFNVAGASNPFGNFNKNTTLLIPNLIKAFMEKRTFFLYGDDYDTKDGSCIRDYIHVVDLCDAHLLAWKWLQANPKVRFESFNLGSGQGFSNWEVINTAQAIFAPEQLQLKIESRRAGDPPVLVVDCTKAKRLLNFQPTRSLHKMLSDETIFYRDFYNRL.

Residues Tyr-16–Ile-17, Ile-37–Thr-42, Asn-59–Leu-60, Phe-81–Thr-85, Thr-126, Tyr-153, Lys-157, and Phe-181 each bind NAD(+). Substrate contacts are provided by Thr-126 and Tyr-153. Tyr-153 serves as the catalytic Proton acceptor. Substrate-binding positions include Asn-182, Thr-198–Leu-199, Phe-215–Tyr-217, Arg-230, and Arg-294–Asp-297.

Belongs to the NAD(P)-dependent epimerase/dehydratase family. Homodimer. The cofactor is NAD(+).

The catalysed reaction is UDP-alpha-D-glucose = UDP-alpha-D-galactose. Its pathway is carbohydrate metabolism; galactose metabolism. Its function is as follows. Involved in the metabolism of galactose. Catalyzes the conversion of UDP-galactose (UDP-Gal) to UDP-glucose (UDP-Glc) through a mechanism involving the transient reduction of NAD. The sequence is that of UDP-glucose 4-epimerase (galE) from Mycoplasma pneumoniae (strain ATCC 29342 / M129 / Subtype 1) (Mycoplasmoides pneumoniae).